We begin with the raw amino-acid sequence, 332 residues long: Oligopeptide transport ATP-binding protein OppF (332 aa).

In terms of domain architecture, ABC transporter spans 23–264 (KNDKSLFFAK…TKHPYTKALM (242 aa)). Position 56-63 (56-63 (GESGCGKS)) interacts with ATP.

This sequence belongs to the ABC transporter superfamily. The complex is composed of two ATP-binding proteins (OppD and OppF), two transmembrane proteins (OppB and OppC) and a solute-binding protein (OppA).

Its subcellular location is the cell inner membrane. The enzyme catalyses a [peptide](out) + ATP + H2O = a [peptide](in) + ADP + phosphate + H(+). Part of the ABC transporter complex OppABCDF involved in the uptake of oligopeptides. Probably responsible for energy coupling to the transport system. This Haemophilus influenzae (strain ATCC 51907 / DSM 11121 / KW20 / Rd) protein is Oligopeptide transport ATP-binding protein OppF (oppF).